Here is a 326-residue protein sequence, read N- to C-terminus: Putative HTH-type transcriptional regulator y4qH (326 aa).

One can recognise an HTH luxR-type domain in the interval Ala-257–Gly-322. Positions Ser-281–Lys-300 form a DNA-binding region, H-T-H motif.

The protein belongs to the autoinducer-regulated transcriptional regulatory protein family.

The sequence is that of Putative HTH-type transcriptional regulator y4qH from Sinorhizobium fredii (strain NBRC 101917 / NGR234).